The following is a 926-amino-acid chain: Armadillo repeat-containing protein 5 (926 aa).

The segment covering 82-104 (PAPSQAASGSAPSSVASAGSTPG) has biased composition (low complexity). The interval 82 to 111 (PAPSQAASGSAPSSVASAGSTPGHAPAAES) is disordered. ARM repeat units follow at residues 139–179 (GACR…NLAM), 181–221 (PESC…NLAD), 223–263 (PQHR…ELSR), 267–306 (RACA…NLCA), 307–354 (QGLV…LCRE), 355–399 (AINR…DTGA), and 401–440 (GKLQ…EERT). At Ser-337 the chain carries Phosphoserine. Residues 472–516 (WSPERCPMPEPSESVSPTPGQTSMSTPRTLRKPGRIPAATPEEPW) form a disordered region. The span at 484–499 (ESVSPTPGQTSMSTPR) shows a compositional bias: polar residues. Residues 745 to 813 (PDLHFVLDSG…LHGCRGCGAA (69 aa)) form the BTB domain.

In terms of assembly, substrate-recognition component of the BCR(ARMC5) E3 ubiquitin ligase complex, at least composed of CUL3, ARMC5 and RBX1. Post-translationally, ubiquitinated by a BCR (BTB-CUL3-RBX1) E3 ubiquitin ligase complex, leading to its degradation. Deubiquitinated by USP7. In terms of tissue distribution, expression is high in the thymus, stomach, bone marrow and lymphatic tissues (including lymph nodes and intestinal wall). Also expressed in the adrenal gland, skin and in brain structures, with noticeable levels found in the cerebellum.

It is found in the nucleus. Its subcellular location is the chromosome. The protein resides in the cytoplasm. It functions in the pathway protein modification; protein ubiquitination. Functionally, substrate-recognition component of a BCR (BTB-CUL3-RBX1) E3 ubiquitin ligase complex that terminates RNA polymerase II (Pol II) transcription in the promoter-proximal region of genes. The BCR(ARMC5) complex provides a quality checkpoint during transcription elongation by driving premature transcription termination of transcripts that are unfavorably configured for transcriptional elongation: the BCR(ARMC5) complex acts by mediating ubiquitination of Pol II subunit POLR2A phosphorylated at 'Ser-5' of the C-terminal domain (CTD), leading to POLR2A degradation. The BCR(ARMC5) complex acts in parallel of the integrator complex and is specific for RNA Pol II originating from the promoter-proximal zone: it does not ubiquitinate elongation-stalled RNA Pol II. The BCR(ARMC5) complex also acts as a regulator of fatty acid desaturation by mediating ubiquitination and degradation of SCAP-free SREBF1 and SREBF2. Involved in fetal development, T-cell function and adrenal gland growth homeostasis. Plays a role in steroidogenesis, modulates steroidogenic enzymes expression and cortisol production. In Mus musculus (Mouse), this protein is Armadillo repeat-containing protein 5.